Reading from the N-terminus, the 224-residue chain is UPF0758 protein Bpro_0948 (224 aa).

The MPN domain maps to 102-224 (LFSTPQAVRD…AVSMAELGLL (123 aa)). Residues H173, H175, and D186 each coordinate Zn(2+). A JAMM motif motif is present at residues 173 to 186 (HNHPSGAATPSRAD).

This sequence belongs to the UPF0758 family.

The protein is UPF0758 protein Bpro_0948 of Polaromonas sp. (strain JS666 / ATCC BAA-500).